The chain runs to 73 residues: UPF0235 protein SYO3AOP1_0257 (73 aa).

This sequence belongs to the UPF0235 family.

This Sulfurihydrogenibium sp. (strain YO3AOP1) protein is UPF0235 protein SYO3AOP1_0257.